The following is a 374-amino-acid chain: UDP-N-acetylglucosamine--N-acetylmuramyl-(pentapeptide) pyrophosphoryl-undecaprenol N-acetylglucosamine transferase (374 aa).

UDP-N-acetyl-alpha-D-glucosamine-binding positions include 14–16 (TGG), asparagine 125, arginine 168, serine 196, and glutamine 297.

Belongs to the glycosyltransferase 28 family. MurG subfamily.

The protein resides in the cell inner membrane. The catalysed reaction is di-trans,octa-cis-undecaprenyl diphospho-N-acetyl-alpha-D-muramoyl-L-alanyl-D-glutamyl-meso-2,6-diaminopimeloyl-D-alanyl-D-alanine + UDP-N-acetyl-alpha-D-glucosamine = di-trans,octa-cis-undecaprenyl diphospho-[N-acetyl-alpha-D-glucosaminyl-(1-&gt;4)]-N-acetyl-alpha-D-muramoyl-L-alanyl-D-glutamyl-meso-2,6-diaminopimeloyl-D-alanyl-D-alanine + UDP + H(+). It participates in cell wall biogenesis; peptidoglycan biosynthesis. Its function is as follows. Cell wall formation. Catalyzes the transfer of a GlcNAc subunit on undecaprenyl-pyrophosphoryl-MurNAc-pentapeptide (lipid intermediate I) to form undecaprenyl-pyrophosphoryl-MurNAc-(pentapeptide)GlcNAc (lipid intermediate II). The polypeptide is UDP-N-acetylglucosamine--N-acetylmuramyl-(pentapeptide) pyrophosphoryl-undecaprenol N-acetylglucosamine transferase (Rhodopseudomonas palustris (strain BisA53)).